The primary structure comprises 221 residues: Glutathione S-transferase Z1 (221 aa).

The region spanning 7-88 is the GST N-terminal domain; that stretch reads EKLKLYSYWR…YLDEKYPEPP (82 aa). Residues 17 to 18, 17 to 22, Gln46, 46 to 47, 59 to 60, Val60, 72 to 73, Gln112, and 116 to 118 each bind glutathione; these read SS, SSCAHR, QF, TV, DS, and NLA. The GST C-terminal domain occupies 93-218; that stretch reads DLHKRAVNYQ…LPEKQPDAPS (126 aa).

It belongs to the GST superfamily. Zeta family. As to quaternary structure, homodimer.

It is found in the cytoplasm. The protein localises to the cytosol. It catalyses the reaction RX + glutathione = an S-substituted glutathione + a halide anion + H(+). In terms of biological role, acts a maleylacetone isomerase. Also catalyzes the glutathione-dependent dehalogenation of dichloroacetic acid to glyoxylic acid. In vitro, possesses glutathione peroxidase activity toward cumene hydroperoxide and linoleic acid-13-hydroperoxide. The protein is Glutathione S-transferase Z1 (GSTZ1) of Arabidopsis thaliana (Mouse-ear cress).